Reading from the N-terminus, the 365-residue chain is Aminomethyltransferase (365 aa).

It belongs to the GcvT family. As to quaternary structure, the glycine cleavage system is composed of four proteins: P, T, L and H.

The catalysed reaction is N(6)-[(R)-S(8)-aminomethyldihydrolipoyl]-L-lysyl-[protein] + (6S)-5,6,7,8-tetrahydrofolate = N(6)-[(R)-dihydrolipoyl]-L-lysyl-[protein] + (6R)-5,10-methylene-5,6,7,8-tetrahydrofolate + NH4(+). Its function is as follows. The glycine cleavage system catalyzes the degradation of glycine. The sequence is that of Aminomethyltransferase from Chlorobium phaeobacteroides (strain DSM 266 / SMG 266 / 2430).